The sequence spans 381 residues: Chaperone protein DnaJ (381 aa).

The 66-residue stretch at 5 to 70 folds into the J domain; sequence DFYEVLGVGR…QKKAAYDQYG (66 aa). A CR-type zinc finger spans residues 136-214; it reads GVSKEIEVPT…CHGQGRKQKT (79 aa). Cys149, Cys152, Cys166, Cys169, Cys188, Cys191, Cys202, and Cys205 together coordinate Zn(2+). 4 CXXCXGXG motif repeats span residues 149-156, 166-173, 188-195, and 202-209; these read CDTCDGSG, CGTCHGHG, CPTCHGKG, and CNECHGQG.

Belongs to the DnaJ family. Homodimer. Requires Zn(2+) as cofactor.

The protein localises to the cytoplasm. Participates actively in the response to hyperosmotic and heat shock by preventing the aggregation of stress-denatured proteins and by disaggregating proteins, also in an autonomous, DnaK-independent fashion. Unfolded proteins bind initially to DnaJ; upon interaction with the DnaJ-bound protein, DnaK hydrolyzes its bound ATP, resulting in the formation of a stable complex. GrpE releases ADP from DnaK; ATP binding to DnaK triggers the release of the substrate protein, thus completing the reaction cycle. Several rounds of ATP-dependent interactions between DnaJ, DnaK and GrpE are required for fully efficient folding. Also involved, together with DnaK and GrpE, in the DNA replication of plasmids through activation of initiation proteins. This is Chaperone protein DnaJ from Vibrio campbellii (strain ATCC BAA-1116).